A 229-amino-acid chain; its full sequence is Deoxyribose-phosphate aldolase (229 aa).

D84 (proton donor/acceptor) is an active-site residue. The active-site Schiff-base intermediate with acetaldehyde is K146. Catalysis depends on K188, which acts as the Proton donor/acceptor.

It belongs to the DeoC/FbaB aldolase family. DeoC type 1 subfamily.

Its subcellular location is the cytoplasm. It carries out the reaction 2-deoxy-D-ribose 5-phosphate = D-glyceraldehyde 3-phosphate + acetaldehyde. Its pathway is carbohydrate degradation; 2-deoxy-D-ribose 1-phosphate degradation; D-glyceraldehyde 3-phosphate and acetaldehyde from 2-deoxy-alpha-D-ribose 1-phosphate: step 2/2. Its function is as follows. Catalyzes a reversible aldol reaction between acetaldehyde and D-glyceraldehyde 3-phosphate to generate 2-deoxy-D-ribose 5-phosphate. This Pyrobaculum neutrophilum (strain DSM 2338 / JCM 9278 / NBRC 100436 / V24Sta) (Thermoproteus neutrophilus) protein is Deoxyribose-phosphate aldolase.